The primary structure comprises 193 residues: ATP synthase subunit b (193 aa).

Residues 24 to 44 (PLAELIVGLLAFGLLVGFFFW) traverse the membrane as a helical segment.

Belongs to the ATPase B chain family. F-type ATPases have 2 components, F(1) - the catalytic core - and F(0) - the membrane proton channel. F(1) has five subunits: alpha(3), beta(3), gamma(1), delta(1), epsilon(1). F(0) has three main subunits: a(1), b(2) and c(10-14). The alpha and beta chains form an alternating ring which encloses part of the gamma chain. F(1) is attached to F(0) by a central stalk formed by the gamma and epsilon chains, while a peripheral stalk is formed by the delta and b chains.

Its subcellular location is the cell membrane. Functionally, f(1)F(0) ATP synthase produces ATP from ADP in the presence of a proton or sodium gradient. F-type ATPases consist of two structural domains, F(1) containing the extramembraneous catalytic core and F(0) containing the membrane proton channel, linked together by a central stalk and a peripheral stalk. During catalysis, ATP synthesis in the catalytic domain of F(1) is coupled via a rotary mechanism of the central stalk subunits to proton translocation. Its function is as follows. Component of the F(0) channel, it forms part of the peripheral stalk, linking F(1) to F(0). The polypeptide is ATP synthase subunit b (Parafrankia sp. (strain EAN1pec)).